A 401-amino-acid chain; its full sequence is Dihydrolipoyllysine-residue succinyltransferase component of 2-oxoglutarate dehydrogenase complex (401 aa).

Residues 2-77 (SVKIIVPSLG…AVGEEIGEIN (76 aa)) form the Lipoyl-binding domain. Lys43 carries the post-translational modification N6-lipoyllysine. Residues 115 to 152 (ILAPSVQKLVTENKLDPNNIKGTGRDGRITKGDVLETI) form the Peripheral subunit-binding (PSBD) domain. Active-site residues include His372 and Asp376.

It belongs to the 2-oxoacid dehydrogenase family. As to quaternary structure, forms a 24-polypeptide structural core with octahedral symmetry. Part of the 2-oxoglutarate dehydrogenase (OGDH) complex composed of E1 (2-oxoglutarate dehydrogenase), E2 (dihydrolipoamide succinyltransferase) and E3 (dihydrolipoamide dehydrogenase); the complex contains multiple copies of the three enzymatic components (E1, E2 and E3). Requires (R)-lipoate as cofactor.

It catalyses the reaction N(6)-[(R)-dihydrolipoyl]-L-lysyl-[protein] + succinyl-CoA = N(6)-[(R)-S(8)-succinyldihydrolipoyl]-L-lysyl-[protein] + CoA. It functions in the pathway amino-acid degradation; L-lysine degradation via saccharopine pathway; glutaryl-CoA from L-lysine: step 6/6. Its function is as follows. E2 component of the 2-oxoglutarate dehydrogenase (OGDH) complex which catalyzes the second step in the conversion of 2-oxoglutarate to succinyl-CoA and CO(2). This is Dihydrolipoyllysine-residue succinyltransferase component of 2-oxoglutarate dehydrogenase complex (sucB) from Rickettsia felis (strain ATCC VR-1525 / URRWXCal2) (Rickettsia azadi).